Reading from the N-terminus, the 210-residue chain is Thymidylate kinase (210 aa).

Residue 10 to 17 (GPEGAGKS) participates in ATP binding.

It belongs to the thymidylate kinase family.

It catalyses the reaction dTMP + ATP = dTDP + ADP. Functionally, phosphorylation of dTMP to form dTDP in both de novo and salvage pathways of dTTP synthesis. The protein is Thymidylate kinase of Pseudomonas fluorescens (strain ATCC BAA-477 / NRRL B-23932 / Pf-5).